Here is a 346-residue protein sequence, read N- to C-terminus: tRNA-specific 2-thiouridylase MnmA (346 aa).

An ATP-binding site is contributed by 6 to 13 (AMSGGTDS). Residue Cys90 is the Nucleophile of the active site. Cysteines 90 and 187 form a disulfide. Gly114 is a binding site for ATP. Residues 137–139 (KDQ) are interaction with tRNA. Residue Cys187 is the Cysteine persulfide intermediate of the active site. Residues 292–293 (RY) are interaction with tRNA.

This sequence belongs to the MnmA/TRMU family.

Its subcellular location is the cytoplasm. The catalysed reaction is S-sulfanyl-L-cysteinyl-[protein] + uridine(34) in tRNA + AH2 + ATP = 2-thiouridine(34) in tRNA + L-cysteinyl-[protein] + A + AMP + diphosphate + H(+). Its function is as follows. Catalyzes the 2-thiolation of uridine at the wobble position (U34) of tRNA, leading to the formation of s(2)U34. In Nitratidesulfovibrio vulgaris (strain ATCC 29579 / DSM 644 / CCUG 34227 / NCIMB 8303 / VKM B-1760 / Hildenborough) (Desulfovibrio vulgaris), this protein is tRNA-specific 2-thiouridylase MnmA.